A 432-amino-acid chain; its full sequence is Trigger factor (432 aa).

The PPIase FKBP-type domain maps to 163 to 248 (GDVVVLDFAA…VHAVKERRLP (86 aa)).

The protein belongs to the FKBP-type PPIase family. Tig subfamily.

Its subcellular location is the cytoplasm. It catalyses the reaction [protein]-peptidylproline (omega=180) = [protein]-peptidylproline (omega=0). Its function is as follows. Involved in protein export. Acts as a chaperone by maintaining the newly synthesized protein in an open conformation. Functions as a peptidyl-prolyl cis-trans isomerase. The polypeptide is Trigger factor (Nitratidesulfovibrio vulgaris (strain DSM 19637 / Miyazaki F) (Desulfovibrio vulgaris)).